Consider the following 140-residue polypeptide: Nucleoside diphosphate kinase (140 aa).

ATP is bound by residues lysine 11, phenylalanine 59, arginine 87, threonine 93, arginine 104, and asparagine 114. Residue histidine 117 is the Pros-phosphohistidine intermediate of the active site.

This sequence belongs to the NDK family. Homotetramer. Requires Mg(2+) as cofactor.

It localises to the cytoplasm. The enzyme catalyses a 2'-deoxyribonucleoside 5'-diphosphate + ATP = a 2'-deoxyribonucleoside 5'-triphosphate + ADP. The catalysed reaction is a ribonucleoside 5'-diphosphate + ATP = a ribonucleoside 5'-triphosphate + ADP. Its function is as follows. Major role in the synthesis of nucleoside triphosphates other than ATP. The ATP gamma phosphate is transferred to the NDP beta phosphate via a ping-pong mechanism, using a phosphorylated active-site intermediate. The polypeptide is Nucleoside diphosphate kinase (Ruegeria sp. (strain TM1040) (Silicibacter sp.)).